The primary structure comprises 185 residues: Peptidyl-tRNA hydrolase (185 aa).

A tRNA-binding site is contributed by Tyr-14. His-19 acts as the Proton acceptor in catalysis. TRNA contacts are provided by Phe-64, Asn-66, and Asn-112.

It belongs to the PTH family. In terms of assembly, monomer.

It localises to the cytoplasm. The catalysed reaction is an N-acyl-L-alpha-aminoacyl-tRNA + H2O = an N-acyl-L-amino acid + a tRNA + H(+). In terms of biological role, hydrolyzes ribosome-free peptidyl-tRNAs (with 1 or more amino acids incorporated), which drop off the ribosome during protein synthesis, or as a result of ribosome stalling. Catalyzes the release of premature peptidyl moieties from peptidyl-tRNA molecules trapped in stalled 50S ribosomal subunits, and thus maintains levels of free tRNAs and 50S ribosomes. The protein is Peptidyl-tRNA hydrolase of Levilactobacillus brevis (strain ATCC 367 / BCRC 12310 / CIP 105137 / JCM 1170 / LMG 11437 / NCIMB 947 / NCTC 947) (Lactobacillus brevis).